A 328-amino-acid polypeptide reads, in one-letter code: Tetraacyldisaccharide 4'-kinase (328 aa).

An ATP-binding site is contributed by T55 to T62.

This sequence belongs to the LpxK family.

It catalyses the reaction a lipid A disaccharide + ATP = a lipid IVA + ADP + H(+). Its pathway is glycolipid biosynthesis; lipid IV(A) biosynthesis; lipid IV(A) from (3R)-3-hydroxytetradecanoyl-[acyl-carrier-protein] and UDP-N-acetyl-alpha-D-glucosamine: step 6/6. Functionally, transfers the gamma-phosphate of ATP to the 4'-position of a tetraacyldisaccharide 1-phosphate intermediate (termed DS-1-P) to form tetraacyldisaccharide 1,4'-bis-phosphate (lipid IVA). This Shigella flexneri serotype 5b (strain 8401) protein is Tetraacyldisaccharide 4'-kinase.